The following is a 218-amino-acid chain: Ras-related protein Rab-27B (218 aa).

Position 2 is an N-acetylthreonine (T2). Residue G16–T24 participates in GTP binding. The Effector region motif lies at F38–F46. Residues D74–Q78, N133–D136, and S163–A165 contribute to the GTP site. An intrachain disulfide couples C123 to C188. Residues H193–C218 are disordered. A compositionally biased stretch (basic and acidic residues) spans L206 to C218. S-geranylgeranyl cysteine attachment occurs at residues C216 and C218. C218 carries the post-translational modification Cysteine methyl ester.

Belongs to the small GTPase superfamily. Rab family. Interacts with SYTL2, SYTL4, MYRIP and MLPH. Interacts with RPH3A and RPH3A. Interacts (GDP-bound form preferentially) with DENND10. Expressed at an extraordinary high level (0.1% of total protein) in urothelium.

The protein localises to the membrane. Its subcellular location is the late endosome. It catalyses the reaction GTP + H2O = GDP + phosphate + H(+). With respect to regulation, regulated by guanine nucleotide exchange factors (GEFs) which promote the exchange of bound GDP for free GTP, GTPase activating proteins (GAPs) which increase the GTP hydrolysis activity, and GDP dissociation inhibitors which inhibit the dissociation of the nucleotide from the GTPase. Activated by GEFs such as DENND10. Its function is as follows. Small GTPase which cycles between active GTP-bound and inactive GDP-bound states. In its active state, binds to a variety of effector proteins to regulate homeostasis of late endocytic pathway, including endosomal positioning, maturation and secretion. Plays a role in NTRK2/TRKB axonal anterograde transport by facilitating the association of NTRK2/TRKB with KLC1. May be involved in targeting uroplakins to urothelial apical membranes. The protein is Ras-related protein Rab-27B (RAB27B) of Bos taurus (Bovine).